The primary structure comprises 100 residues: MSAAGEEDKKPAGGEGGGAHINLKVKGQDGNEVFFRIKRSTQLKKLMNAYCDRQSVDMNAIAFLFDGRRLRGEQTPDELEMEDGDEIDAMLHQTGGCLPA.

The span at 1–12 (MSAAGEEDKKPA) shows a compositional bias: basic and acidic residues. The disordered stretch occupies residues 1 to 23 (MSAAGEEDKKPAGGEGGGAHINL). One can recognise a Ubiquitin-like domain in the interval 19–96 (AHINLKVKGQ…IDAMLHQTGG (78 aa)). Glycine 96 is covalently cross-linked (Glycyl lysine isopeptide (Gly-Lys) (interchain with K-? in acceptor proteins)).

Belongs to the ubiquitin family. SUMO subfamily. Interacts with SAE2, SCE1 and SIZ1. Covalently attached to a number of proteins.

The protein resides in the nucleus. It localises to the cytoplasm. Functionally, ubiquitin-like protein which can be covalently attached to target lysines as a monomer. Does not seem to be involved in protein degradation and may function as an antagonist of ubiquitin in the degradation process. The polypeptide is Small ubiquitin-related modifier 1 (SUMO1) (Oryza sativa subsp. japonica (Rice)).